The chain runs to 241 residues: tRNA (guanine-N(7)-)-methyltransferase B (241 aa).

Glycine 61, glutamate 84, arginine 86, asparagine 117, alanine 118, and leucine 137 together coordinate S-adenosyl-L-methionine. Residue aspartate 140 is part of the active site. The alphaC helix stretch occupies residues 141-149 (PHFKKTKHK). Residues threonine 215 and glutamate 217 each contribute to the S-adenosyl-L-methionine site. The interval 215–223 (TEEGKKVQR) is alpha6 helix.

The protein belongs to the class I-like SAM-binding methyltransferase superfamily. TrmB family. In terms of assembly, catalytic component of the METTL1-WDR4 complex, composed of mettl1 and wdr4.

The protein localises to the nucleus. The catalysed reaction is guanosine(46) in tRNA + S-adenosyl-L-methionine = N(7)-methylguanosine(46) in tRNA + S-adenosyl-L-homocysteine. The enzyme catalyses a guanosine in mRNA + S-adenosyl-L-methionine = an N(7)-methylguanosine in mRNA + S-adenosyl-L-homocysteine. It carries out the reaction a guanosine in miRNA + S-adenosyl-L-methionine = an N(7)-methylguanosine in miRNA + S-adenosyl-L-homocysteine. The protein operates within tRNA modification; N(7)-methylguanine-tRNA biosynthesis. Its function is as follows. Catalytic component of METTL1-WDR4 methyltransferase complex that mediates the formation of N(7)-methylguanine in a subset of RNA species, such as tRNAs, mRNAs and microRNAs (miRNAs). Catalyzes the formation of N(7)-methylguanine at position 46 (m7G46) in a large subset of tRNAs that contain the 5'-RAGGU-3' motif within the variable loop. M7G46 interacts with C13-G22 in the D-loop to stabilize tRNA tertiary structure and protect tRNAs from decay. Also acts as a methyltransferase for a subset of internal N(7)-methylguanine in mRNAs. Internal N(7)-methylguanine methylation of mRNAs in response to stress promotes their relocalization to stress granules, thereby suppressing their translation. Also methylates a specific subset of miRNAs. This chain is tRNA (guanine-N(7)-)-methyltransferase B (mettl1-B), found in Xenopus tropicalis (Western clawed frog).